We begin with the raw amino-acid sequence, 456 residues long: High mobility group B protein 6 (456 aa).

Disordered stretches follow at residues 1 to 42 (MATN…KSAK), 117 to 142 (SSLT…KRPS), 238 to 258 (AEQD…PKHP), and 349 to 389 (MLKK…YFLF). Residues 11-21 (KKPRNSRKALK) show a composition bias toward basic residues. The HMG box 1 DNA-binding region spans 138–206 (TKRPSSSYVL…AYLQVIAKEK (69 aa)). Positions 240–254 (QDNKKKNKKEKDPLK) are enriched in basic and acidic residues. The segment at residues 255-321 (PKHPVSAFLV…TYLQAMEEYK (67 aa)) is a DNA-binding region (HMG box 2). The segment covering 354–363 (EKTDNLIKKE) has biased composition (basic and acidic residues). Positions 379-447 (PKKPASSYFL…AYKKEVEAYN (69 aa)) form a DNA-binding region, HMG box 3.

It is found in the nucleus. This chain is High mobility group B protein 6 (HMGB6), found in Arabidopsis thaliana (Mouse-ear cress).